A 411-amino-acid polypeptide reads, in one-letter code: Multifunctional CCA protein (411 aa).

ATP contacts are provided by glycine 8 and arginine 11. CTP is bound by residues glycine 8 and arginine 11. Mg(2+) contacts are provided by aspartate 21 and aspartate 23. Residues arginine 91, arginine 137, and arginine 140 each coordinate ATP. CTP is bound by residues arginine 91, arginine 137, and arginine 140. The HD domain occupies 228–329 (CGIHTLMVAK…VNILDQIDSW (102 aa)).

This sequence belongs to the tRNA nucleotidyltransferase/poly(A) polymerase family. Bacterial CCA-adding enzyme type 1 subfamily. In terms of assembly, monomer. Can also form homodimers and oligomers. Requires Mg(2+) as cofactor. The cofactor is Ni(2+).

It catalyses the reaction a tRNA precursor + 2 CTP + ATP = a tRNA with a 3' CCA end + 3 diphosphate. The catalysed reaction is a tRNA with a 3' CCA end + 2 CTP + ATP = a tRNA with a 3' CCACCA end + 3 diphosphate. Its function is as follows. Catalyzes the addition and repair of the essential 3'-terminal CCA sequence in tRNAs without using a nucleic acid template. Adds these three nucleotides in the order of C, C, and A to the tRNA nucleotide-73, using CTP and ATP as substrates and producing inorganic pyrophosphate. tRNA 3'-terminal CCA addition is required both for tRNA processing and repair. Also involved in tRNA surveillance by mediating tandem CCA addition to generate a CCACCA at the 3' terminus of unstable tRNAs. While stable tRNAs receive only 3'-terminal CCA, unstable tRNAs are marked with CCACCA and rapidly degraded. The protein is Multifunctional CCA protein of Photobacterium profundum (strain SS9).